The following is a 677-amino-acid chain: Fermitin family homolog 1 (677 aa).

The 558-residue stretch at Met96 to Leu653 folds into the FERM domain. Ser170, Ser179, and Ser361 each carry phosphoserine. In terms of domain architecture, PH spans Glu337–Glu433.

It belongs to the kindlin family. As to quaternary structure, interacts with the cytoplasmic domain of integrins ITGB1 and ITGB3.

It is found in the cytoplasm. Its subcellular location is the cytoskeleton. The protein resides in the cell junction. It localises to the focal adhesion. The protein localises to the cell projection. It is found in the ruffle membrane. In terms of biological role, involved in cell adhesion. Contributes to integrin activation. When coexpressed with talin, potentiates activation of ITGA2B. Required for normal keratinocyte proliferation. Required for normal polarization of basal keratinocytes in skin, and for normal cell shape. Required for normal adhesion of keratinocytes to fibronectin and laminin, and for normal keratinocyte migration to wound sites. The polypeptide is Fermitin family homolog 1 (FERMT1) (Pongo abelii (Sumatran orangutan)).